A 124-amino-acid chain; its full sequence is Large ribosomal subunit protein bL21 (124 aa).

Belongs to the bacterial ribosomal protein bL21 family. Part of the 50S ribosomal subunit. Contacts protein L20.

In terms of biological role, this protein binds to 23S rRNA in the presence of protein L20. The protein is Large ribosomal subunit protein bL21 of Sinorhizobium medicae (strain WSM419) (Ensifer medicae).